A 222-amino-acid chain; its full sequence is Large ribosomal subunit protein uL4 (222 aa).

This sequence belongs to the universal ribosomal protein uL4 family. Part of the 50S ribosomal subunit.

Its function is as follows. One of the primary rRNA binding proteins, this protein initially binds near the 5'-end of the 23S rRNA. It is important during the early stages of 50S assembly. It makes multiple contacts with different domains of the 23S rRNA in the assembled 50S subunit and ribosome. Forms part of the polypeptide exit tunnel. The chain is Large ribosomal subunit protein uL4 from Methylacidiphilum infernorum (isolate V4) (Methylokorus infernorum (strain V4)).